Consider the following 290-residue polypeptide: Arginine N-acetyltransferase avaD (290 aa).

157–163 (NQAHFEA) provides a ligand contact to acetyl-CoA.

This sequence belongs to the acetyltransferase family. GCN5 subfamily.

The protein operates within secondary metabolite metabolism. In terms of biological role, arginine N-acetyltransferase; part of the cluster that mediates the biosynthesis of a highly modified cyclo-arginine-tryptophan dipeptide (cRW). Within the pathway, avaD catalyzes the N-acetylation of the guanidine group. The first step of the pathway is perfornmed by the arginine-containing cyclodipeptide synthase (RCPDS) avaA that acts as the scaffold-generating enzyme and is responsible for formation of the cyclo-Arg-Trp (cRW) diketopiperazine. AvaB then acts as a multifunctional flavoenzyme that is responsible for generating the cyclo-Arg-formylkynurenine DKP, which can be deformylated by avaC. AvaB then further catalyzes an additional N-oxidation followed by cyclization and dehydration. The next step is an N-acetylation of the guanidine group catalyzed by the arginine N-acetyltransferase avaD. The roles of the additional enzymes identified within the ava cluster still have to be determined. In Aspergillus versicolor, this protein is Arginine N-acetyltransferase avaD.